The primary structure comprises 381 residues: Lipid-A-disaccharide synthase (381 aa).

Belongs to the LpxB family.

It carries out the reaction a lipid X + a UDP-2-N,3-O-bis[(3R)-3-hydroxyacyl]-alpha-D-glucosamine = a lipid A disaccharide + UDP + H(+). It functions in the pathway bacterial outer membrane biogenesis; LPS lipid A biosynthesis. In terms of biological role, condensation of UDP-2,3-diacylglucosamine and 2,3-diacylglucosamine-1-phosphate to form lipid A disaccharide, a precursor of lipid A, a phosphorylated glycolipid that anchors the lipopolysaccharide to the outer membrane of the cell. The chain is Lipid-A-disaccharide synthase from Psychromonas ingrahamii (strain DSM 17664 / CCUG 51855 / 37).